The primary structure comprises 449 residues: Interferon-related developmental regulator 1 (449 aa).

A compositionally biased stretch (basic residues) spans 1-10 (MPKNKKRNAP). Residues 1 to 42 (MPKNKKRNAPHRGGGGGGGSGAATSAATAGGPHRTVQPFSDE) form a disordered region. A compositionally biased stretch (gly residues) spans 12 to 21 (RGGGGGGGSG). A compositionally biased stretch (low complexity) spans 22 to 31 (AATSAATAGG).

Belongs to the IFRD family. Interacts with PSIP1/LEDGF.

In terms of biological role, could play a role in regulating gene activity in the proliferative and/or differentiative pathways induced by NGF. May be an autocrine factor that attenuates or amplifies the initial ligand-induced signal. This is Interferon-related developmental regulator 1 (Ifrd1) from Mus musculus (Mouse).